Consider the following 327-residue polypeptide: GMP reductase (327 aa).

Cysteine 176 acts as the Thioimidate intermediate in catalysis. Residue 205–228 (IIADGGIRTHGDIAKSIRFGASMV) coordinates NADP(+).

It belongs to the IMPDH/GMPR family. GuaC type 2 subfamily.

It carries out the reaction IMP + NH4(+) + NADP(+) = GMP + NADPH + 2 H(+). Catalyzes the irreversible NADPH-dependent deamination of GMP to IMP. It functions in the conversion of nucleobase, nucleoside and nucleotide derivatives of G to A nucleotides, and in maintaining the intracellular balance of A and G nucleotides. This is GMP reductase from Streptococcus gordonii (strain Challis / ATCC 35105 / BCRC 15272 / CH1 / DL1 / V288).